The following is a 258-amino-acid chain: Regulatory protein RecX (258 aa).

Belongs to the RecX family.

The protein resides in the cytoplasm. Functionally, modulates RecA activity. In Streptococcus pneumoniae serotype 19F (strain G54), this protein is Regulatory protein RecX.